The primary structure comprises 509 residues: Cytochrome P450 6A1 (509 aa).

C449 serves as a coordination point for heme.

It belongs to the cytochrome P450 family. It depends on heme as a cofactor.

Its subcellular location is the endoplasmic reticulum membrane. It localises to the microsome membrane. It carries out the reaction an organic molecule + reduced [NADPH--hemoprotein reductase] + O2 = an alcohol + oxidized [NADPH--hemoprotein reductase] + H2O + H(+). Involved in the metabolism of insect hormones and in the breakdown of synthetic insecticides. This chain is Cytochrome P450 6A1 (CYP6A1), found in Musca domestica (House fly).